The sequence spans 401 residues: Chalcone synthase 4 (401 aa).

Cys168 is an active-site residue.

It belongs to the thiolase-like superfamily. Chalcone/stilbene synthases family.

It carries out the reaction (E)-4-coumaroyl-CoA + 3 malonyl-CoA + 3 H(+) = 2',4,4',6'-tetrahydroxychalcone + 3 CO2 + 4 CoA. Its pathway is secondary metabolite biosynthesis; flavonoid biosynthesis. Functionally, the primary product of this enzyme is 4,2',4',6'-tetrahydroxychalcone (also termed naringenin-chalcone or chalcone) which can under specific conditions spontaneously isomerize into naringenin. The polypeptide is Chalcone synthase 4 (CHS4) (Sorghum bicolor (Sorghum)).